Reading from the N-terminus, the 1745-residue chain is MSARAAAAKSTAMEETAIWEQHTVTLHRAPGFGFGIAISGGRDNPHFQSGETSIVISDVLKGGPAEGQLQENDRVAMVNGVSMDNVEHAFAVQQLRKSGKNAKITIRRKKKVQIPVSHPDPEPVSDNEDDSYDEEVHDPRAGRGALANRRSEKSWARDRSASRERSLSPRSDRRSVASSQPAKPTKVTLVKSRKNEEYGLRLASHIFVKEISQDSLAARDGNIQEGDVVLKINGTVTENMSLTDAKTLIERSKGKLKMVVQRDERATLLNVPDLSDSIHSANASERDDISEIQSLASDHSGRSHDRPPRRSQSRSPDQRSEPSDHSTQSPQQPSNGSLRSREEERMSKPGAISTPVKHVDDHPPKAVEEVTVEKNEKQTPTLPEPKPVYAQVGQPDVDLPVSPSDGALPNSAHEDGILRPSMKLVKFRKGDSVGLRLAGGNDVGIFVAGVLEDSPAAKEGLEEGDQILRVNNVDFTNIIREEAVLFLLDLPKGEEVTILAQKKKDVYRRIVESDVGDSFYIRTHFEYEKESPYGLSFNKGEVFRVVDTLYNGKLGSWLAIRIGKNHKEVERGIIPNKNRAEQLASVQYTLPKTAGGDRADFWRFRGLRSSKRNLRKSREDLSAQPVQTKFPAYERVVLREAGFLRPVTIFGPIADVAREKLAREEPDIYQIAKSEPRDAGTDHRSSGIIRLHTIKQIIDQDKHALLDVTPNAVDRLNYAQWYPIVVFLNPDSKQGVKTMRMRLCPESRKSARKLYERSHKLRKNNHHLFTTTINLNSMNDGWYGALKEAIQQQQNQLVWVSEGKADGATSDDLDLHDDRLSYLSAPGSEYSMYSTDSRHTSDYEDTDTEGGAYTDQELDETLNDEVGTPPESAITRSSEPVREDSSGMHHENQTYPPYSPQAQPQAIHRIDSPGLKPASQQKAEASSPVPYLSPETTPASSASAVNHNVSVTNVSLEEPAPAPPTSHASQPGCLGAPSAEAAHVVLRGEGPPLPPHADPAKVYRKEPYSEEMMRQNHILKQPALGHPGQRPDKEPNLAYEPQLPYIEKQASRDLEQPSYRYEVSSYTDQFSRNYDHRLRFEDRIPTYEDQWSYYDDKQPYQPRPFENQHPRDLDSRQHPEEASERGYFQRFEEPAPLSYDSRTRYEQLPRTSTLRHEEQPAPAYEVHNRYRPEAQPYSSTGPKSSEPKQYFDQYPRSYEQVPPPGFTSKTGHYEPLHGAAVVPPLIPSSQQKPEVLPSATKPQPPPPTLTEEEEDPAMKPQSVLTRVKMFENKRSASLENKKDVNDTASFKPPEVASKPPGASLAGPKPVPQSQFSEHDKTLYRLPEPQKPQVKPPEDIVRSNHYDPEEDEEYYRKQLSYFDRRSFESKPSAHLPAGHHSEPAKPVHSQSQPNFSSYSSKGKPETDAVDRSFSEKRYDPAQATPPPPPLPSQYSQPAPPLSSSSLHIHSKGAQGEGNSVSLDFQNSYMSKPDPPPSQSKPATFRPPTREDPPQTFYPQKSFPDKAPVNGAEQTQKTITPVYNRFTPKPYTSSARPFERKFESPKFNHNLLPSETVHKPELSSKTPTSPKTLMKAHSSTQPPEFDSGVETFSVHTDKPKYQMNNISTMPKAVPVSPSAVEEDEDEDGHTVVATARGIFNSNGGVLSSIETGVSIIIPQGAIPEGIEQEIYFKVCRDNSILPPLDKEKGETLLSPLVMCGPHGLKFLKPVELRLPHCDPKTWQNKCLPGDPNYLVGANCVSVLIDHF.

One can recognise a PDZ 1 domain in the interval 23 to 110 (TVTLHRAPGF…NAKITIRRKK (88 aa)). Residues 102–112 (AKITIRRKKKV) show a composition bias toward basic residues. The disordered stretch occupies residues 102-189 (AKITIRRKKK…QPAKPTKVTL (88 aa)). The segment covering 123-136 (PVSDNEDDSYDEEV) has biased composition (acidic residues). The residue at position 125 (Ser-125) is a Phosphoserine. Tyr-132 is subject to Phosphotyrosine. Basic and acidic residues predominate over residues 149–175 (RRSEKSWARDRSASRERSLSPRSDRRS). Ser-175, Ser-178, and Ser-179 each carry phosphoserine. Residue Thr-185 is modified to Phosphothreonine. The PDZ 2 domain maps to 186 to 264 (KVTLVKSRKN…KLKMVVQRDE (79 aa)). Residues Ser-212 and Ser-241 each carry the phosphoserine modification. A Phosphothreonine modification is found at Thr-267. Phosphoserine occurs at positions 275, 277, 280, 284, 290, 294, 297, 300, 323, 329, 334, 337, and 353. Positions 296–364 (ASDHSGRSHD…PVKHVDDHPP (69 aa)) are disordered. Residues 299–308 (HSGRSHDRPP) are compositionally biased toward basic and acidic residues. A compositionally biased stretch (polar residues) spans 325-338 (HSTQSPQQPSNGSL). Position 354 is a phosphothreonine (Thr-354). In terms of domain architecture, PDZ 3 spans 421–502 (SMKLVKFRKG…GEEVTILAQK (82 aa)). Positions 516–584 (GDSFYIRTHF…PNKNRAEQLA (69 aa)) constitute an SH3 domain. The Guanylate kinase-like domain maps to 610 to 791 (SKRNLRKSRE…WYGALKEAIQ (182 aa)). 2 positions are modified to phosphoserine: Ser-617 and Ser-622. Positions 633-876 (YERVVLREAG…GTPPESAITR (244 aa)) are occludin (OCLN)-binding region. The residue at position 809 (Thr-809) is a Phosphothreonine. Residues Ser-810 and Ser-821 each carry the phosphoserine modification. At Tyr-822 the chain carries Phosphotyrosine. 3 positions are modified to phosphoserine: Ser-824, Ser-828, and Ser-837. Disordered regions lie at residues 825–944 (APGS…SASA) and 956–1042 (LEEP…YEPQ). Thr-846, Thr-848, Thr-854, Thr-861, and Thr-868 each carry phosphothreonine. Residues 879 to 892 (EPVREDSSGMHHEN) are compositionally biased toward basic and acidic residues. The segment covering 893–906 (QTYPPYSPQAQPQA) has biased composition (low complexity). At Ser-912 the chain carries Phosphoserine. The segment covering 998-1014 (DPAKVYRKEPYSEEMMR) has biased composition (basic and acidic residues). Ser-1071 carries the phosphoserine modification. The tract at residues 1090-1586 (QWSYYDDKQP…STQPPEFDSG (497 aa)) is disordered. A compositionally biased stretch (basic and acidic residues) spans 1106–1124 (ENQHPRDLDSRQHPEEASE). Ser-1138 carries the phosphoserine modification. Phosphotyrosine occurs at positions 1139 and 1164. The segment at 1150–1370 (RTSTLRHEEQ…FDRRSFESKP (221 aa)) is actin-binding region (ABR). Basic and acidic residues-rich tracts occupy residues 1268–1285 (KMFENKRSASLENKKDVN) and 1335–1346 (PPEDIVRSNHYD). Residue Tyr-1353 is modified to Phosphotyrosine. Ser-1365 is modified (phosphoserine). The segment covering 1388 to 1399 (SQSQPNFSSYSS) has biased composition (low complexity). Positions 1401–1418 (GKPETDAVDRSFSEKRYD) are enriched in basic and acidic residues. Ser-1411 bears the Phosphoserine mark. Residues 1431-1445 (SQYSQPAPPLSSSSL) are compositionally biased toward low complexity. Polar residues-rich tracts occupy residues 1455 to 1468 (EGNSVSLDFQNSYM) and 1510 to 1519 (AEQTQKTITP). Residues 1535-1544 (PFERKFESPK) are compositionally biased toward basic and acidic residues. The residue at position 1542 (Ser-1542) is a Phosphoserine. Residues 1561–1580 (SSKTPTSPKTLMKAHSSTQP) are compositionally biased toward polar residues. Position 1614 is a phosphoserine (Ser-1614). In terms of domain architecture, ZU5 spans 1631 to 1745 (ATARGIFNSN…NCVSVLIDHF (115 aa)).

The protein belongs to the MAGUK family. As to quaternary structure, homodimer. Forms heterodimers TJP3. Forms a heterodimer (via PDZ2 domain) with TJP2/ZO2 (via PDZ2 domain). Interacts with OCLN, CALM, claudins, CGN/cingulin, CXADR, GJD3 and UBN1. Interacts (via ZU5 domain) with CDC42BPB. Interacts (via PDZ domain) with GJA1. Interacts (via PDZ domains) with ANKRD2. Interacts with POPDC1 (via the C-terminus cytoplasmic tail). Interacts with GJA12 and KIRREL1. Interacts with HSPA4. Interacts (via ZU5 domain) with MYZAP. Interacts with DLL1. Interacts with USP53 (via the C-terminal region). Interacts with DNMBP (via C-terminal domain); required for the apical cell-cell junction localization of DNMBP. Interacts with SPEF1. Interacts (via N-terminus) with CTNNA1. Interacts with CLDN18. Interacts with CLDN16 (via TRV motif); this is a prerequisite for anchoring of CLDN16 at the tight junction. Interacts with PKP1; the interaction facilitates TJP1/ZO-1 localization to the plasma membrane. Interacts with PATJ (via PDZ1-6 domains); the interaction is required for attachment and extension of TJP1/ZO1 condensates along the apical cell interface. Post-translationally, phosphorylated at tyrosine redidues in response to epidermal growth factor (EGF). This response is dependent on an intact actin microfilament system. Dephosphorylated by PTPRJ. Expressed between ameloblasts, at ameloblast-ameloblast junctions and in the stratum intermedium during pre-secretory and secretory stages of tooth development (at protein level).

The protein resides in the cell membrane. Its subcellular location is the cell junction. The protein localises to the tight junction. It is found in the gap junction. It localises to the cytoplasm. The protein resides in the myofibril. Its subcellular location is the sarcomere. The protein localises to the i band. Its function is as follows. Tjp1, TjpP2, and Tjp3 are closely related scaffolding proteins that link tight junction (TJ) transmembrane proteins such as claudins, junctional adhesion molecules, and occludin to the actin cytoskeleton. Forms a multistranded TJP1/ZO1 condensate which elongates to form a tight junction belt, the belt is anchored at the apical cell membrane via interaction with PATJ. The tight junction acts to limit movement of substances through the paracellular space and as a boundary between the compositionally distinct apical and basolateral plasma membrane domains of epithelial and endothelial cells. Necessary for lumenogenesis, and particularly efficient epithelial polarization and barrier formation. Plays a role in the regulation of cell migration by targeting Cdc42bpb to the leading edge of migrating cells. Plays an important role in podosome formation and associated function, thus regulating cell adhesion and matrix remodeling. With Tjp2 and TJjp3, participates in the junctional retention and stability of the transcription factor Dbpa, but is not involved in its shuttling to the nucleus. May play a role in mediating cell morphology changes during ameloblast differentiation via its role in tight junctions. The protein is Tight junction protein 1 of Mus musculus (Mouse).